The sequence spans 473 residues: Glutamate-1-semialdehyde 2,1-aminomutase, chloroplastic (473 aa).

The transit peptide at 1 to 37 (MSATLTGSGTALGFSCSSKISKRVSSSPSTRCSIKMS) directs the protein to the chloroplast. Lys313 carries the post-translational modification N6-(pyridoxal phosphate)lysine.

The protein belongs to the class-III pyridoxal-phosphate-dependent aminotransferase family. HemL subfamily. As to quaternary structure, homodimer. Pyridoxal 5'-phosphate serves as cofactor.

The protein localises to the plastid. It is found in the chloroplast. The enzyme catalyses (S)-4-amino-5-oxopentanoate = 5-aminolevulinate. It participates in porphyrin-containing compound metabolism; protoporphyrin-IX biosynthesis; 5-aminolevulinate from L-glutamyl-tRNA(Glu): step 2/2. The protein operates within porphyrin-containing compound metabolism; chlorophyll biosynthesis. This chain is Glutamate-1-semialdehyde 2,1-aminomutase, chloroplastic (GSA), found in Brassica napus (Rape).